Here is a 142-residue protein sequence, read N- to C-terminus: Large ribosomal subunit protein uL11 (142 aa).

Belongs to the universal ribosomal protein uL11 family. Part of the ribosomal stalk of the 50S ribosomal subunit. Interacts with L10 and the large rRNA to form the base of the stalk. L10 forms an elongated spine to which L12 dimers bind in a sequential fashion forming a multimeric L10(L12)X complex. One or more lysine residues are methylated.

Functionally, forms part of the ribosomal stalk which helps the ribosome interact with GTP-bound translation factors. The protein is Large ribosomal subunit protein uL11 of Pectobacterium atrosepticum (strain SCRI 1043 / ATCC BAA-672) (Erwinia carotovora subsp. atroseptica).